The chain runs to 271 residues: ATP synthase subunit a (271 aa).

A run of 5 helical transmembrane segments spans residues 40 to 60 (TINIDSMFFSVVLGLLFLVLF), 100 to 120 (LIAPLALTIFVWVFLMNLMDL), 146 to 166 (DVNVTLSMALGVFILILFYSI), 220 to 240 (LIFILIAGLLPWWSQWILNVP), and 242 to 262 (AIFHILIITLQAFIFMVLTIV).

It belongs to the ATPase A chain family. As to quaternary structure, F-type ATPases have 2 components, CF(1) - the catalytic core - and CF(0) - the membrane proton channel. CF(1) has five subunits: alpha(3), beta(3), gamma(1), delta(1), epsilon(1). CF(0) has three main subunits: a(1), b(2) and c(9-12). The alpha and beta chains form an alternating ring which encloses part of the gamma chain. CF(1) is attached to CF(0) by a central stalk formed by the gamma and epsilon chains, while a peripheral stalk is formed by the delta and b chains.

It is found in the cell inner membrane. In terms of biological role, key component of the proton channel; it plays a direct role in the translocation of protons across the membrane. The chain is ATP synthase subunit a from Escherichia coli O1:K1 / APEC.